Consider the following 320-residue polypeptide: Cytochrome f (320 aa).

The N-terminal stretch at Met-1 to Ala-35 is a signal peptide. Tyr-36, Cys-56, Cys-59, and His-60 together coordinate heme. Residues Val-286–Lys-306 form a helical membrane-spanning segment.

It belongs to the cytochrome f family. As to quaternary structure, the 4 large subunits of the cytochrome b6-f complex are cytochrome b6, subunit IV (17 kDa polypeptide, petD), cytochrome f and the Rieske protein, while the 4 small subunits are PetG, PetL, PetM and PetN. The complex functions as a dimer. Heme is required as a cofactor.

It localises to the plastid. The protein resides in the chloroplast thylakoid membrane. Its function is as follows. Component of the cytochrome b6-f complex, which mediates electron transfer between photosystem II (PSII) and photosystem I (PSI), cyclic electron flow around PSI, and state transitions. The polypeptide is Cytochrome f (Phalaenopsis aphrodite subsp. formosana (Moth orchid)).